We begin with the raw amino-acid sequence, 310 residues long: Proline dehydrogenase (310 aa).

Lysine 98 is a binding site for substrate. The active site involves aspartate 135. FAD contacts are provided by residues methionine 136, glutamine 166, 187–192 (RMVKGA), 229–230 (TH), and 292–295 (RIAE). Arginine 187 is an active-site residue. A substrate-binding site is contributed by 291–292 (RR).

Belongs to the proline dehydrogenase family. FAD serves as cofactor.

The catalysed reaction is L-proline + a quinone = (S)-1-pyrroline-5-carboxylate + a quinol + H(+). The protein operates within amino-acid degradation; L-proline degradation into L-glutamate; L-glutamate from L-proline: step 1/2. Its function is as follows. Converts proline to delta-1-pyrroline-5-carboxylate. This Deinococcus radiodurans (strain ATCC 13939 / DSM 20539 / JCM 16871 / CCUG 27074 / LMG 4051 / NBRC 15346 / NCIMB 9279 / VKM B-1422 / R1) protein is Proline dehydrogenase.